We begin with the raw amino-acid sequence, 36 residues long: Glucagon (36 aa).

This sequence belongs to the glucagon family. In terms of tissue distribution, produced by the X-cells of the islets of pancreas.

Its subcellular location is the secreted. Functionally, promotes hydrolysis of glycogen and lipids, and raises the blood sugar level. This is Glucagon (gcg) from Hydrolagus colliei (Spotted ratfish).